The chain runs to 82 residues: U1-theraphotoxin-Ct1b (82 aa).

The signal sequence occupies residues 1–23 (MRTFTLIAILTCALLVIYHAAEA). The propeptide occupies 24-44 (EELEAKDVIESKALATLDEER).

It belongs to the neurotoxin 12 (Hwtx-2) family. 03 (juruin) subfamily. Contains 3 disulfide bonds. Two different connectivities are observed in similar proteins (C1-C3, C2-C5, C4-C6 or C1-C4, C2-C5, C3-C6). Expressed by the venom gland.

The protein localises to the secreted. Its function is as follows. This toxin causes paralysis and death to sheep blowflies. It does not target insect sodium channels. The protein is U1-theraphotoxin-Ct1b of Coremiocnemis tropix (Australian tarantula spider).